A 624-amino-acid chain; its full sequence is Glutamine--fructose-6-phosphate aminotransferase [isomerizing] (624 aa).

Cys-2 functions as the Nucleophile; for GATase activity in the catalytic mechanism. One can recognise a Glutamine amidotransferase type-2 domain in the interval 2-225; it reads CGIVGYVGRR…QDQAVVITAD (224 aa). 2 consecutive SIS domains span residues 297–436 and 469–614; these read SDQE…ARGT and LAHR…VDKP. Residue Lys-619 is the For Fru-6P isomerization activity of the active site.

Homodimer.

Its subcellular location is the cytoplasm. It catalyses the reaction D-fructose 6-phosphate + L-glutamine = D-glucosamine 6-phosphate + L-glutamate. Functionally, catalyzes the first step in hexosamine metabolism, converting fructose-6P into glucosamine-6P using glutamine as a nitrogen source. The protein is Glutamine--fructose-6-phosphate aminotransferase [isomerizing] of Mycobacterium bovis (strain ATCC BAA-935 / AF2122/97).